The sequence spans 200 residues: Recombination protein RecR (200 aa).

A C4-type zinc finger spans residues 58–73 (CQKCHNISDTTLCSIC). Residues 81-176 (GLICVVENIQ…KLSNIARGVA (96 aa)) form the Toprim domain.

It belongs to the RecR family.

May play a role in DNA repair. It seems to be involved in an RecBC-independent recombinational process of DNA repair. It may act with RecF and RecO. This is Recombination protein RecR from Amoebophilus asiaticus (strain 5a2).